The primary structure comprises 92 residues: Evasin P675 (92 aa).

A signal peptide spans Met1–Ala24. 3 cysteine pairs are disulfide-bonded: Cys44/Cys63, Cys48/Cys65, and Cys59/Cys76. N-linked (GlcNAc...) asparagine glycosylation occurs at Asn47. N-linked (GlcNAc...) asparagine glycosylation occurs at Asn70.

The protein localises to the secreted. Functionally, salivary chemokine-binding protein which binds to host chemokines CXCL1, CXCL2, CXCL3, CXCL4, CXCL5, CXCL6, CXCL10, CXCL11 and CXCL13. This chain is Evasin P675, found in Ixodes ricinus (Common tick).